Consider the following 520-residue polypeptide: Peptide chain release factor 3 (520 aa).

Residues 8-277 form the tr-type G domain; it reads ESRKTFAIIS…HAPMPNARQT (270 aa). Residues 17-24, 85-89, and 139-142 each bind GTP; these read SHPDAGKT, DTPGH, and NKLD.

It belongs to the TRAFAC class translation factor GTPase superfamily. Classic translation factor GTPase family. PrfC subfamily.

It localises to the cytoplasm. Increases the formation of ribosomal termination complexes and stimulates activities of RF-1 and RF-2. It binds guanine nucleotides and has strong preference for UGA stop codons. It may interact directly with the ribosome. The stimulation of RF-1 and RF-2 is significantly reduced by GTP and GDP, but not by GMP. This is Peptide chain release factor 3 from Staphylococcus saprophyticus subsp. saprophyticus (strain ATCC 15305 / DSM 20229 / NCIMB 8711 / NCTC 7292 / S-41).